The following is a 78-amino-acid chain: Acyl carrier protein BQ2027_MB0103 (78 aa).

Positions 1–78 (MRDRILAAVC…ELEAVCTEFG (78 aa)) constitute a Carrier domain. At Ser35 the chain carries O-(pantetheine 4'-phosphoryl)serine.

Belongs to the acyl carrier protein (ACP) family. Requires pantetheine 4'-phosphate as cofactor.

It functions in the pathway lipid metabolism; fatty acid metabolism. Its function is as follows. Acyl-carrier protein (ACP) involved in the biosynthesis of a unique class of isonitrile lipopeptides (INLPs) that seem to play a role in metal acquisition. Is the dedicated ACP for the loading of activated acyl groups catalyzed by FadD10. The polypeptide is Acyl carrier protein BQ2027_MB0103 (Mycobacterium bovis (strain ATCC BAA-935 / AF2122/97)).